Reading from the N-terminus, the 171-residue chain is CASP-like protein 5A2 (171 aa).

Over 1–39 (MDGSAHLRDPPGPAVLRWRLEDMHIIPGTSGSLALRICQ) the chain is Cytoplasmic. A helical membrane pass occupies residues 40–60 (FSAAIVSFSVMISAANFSSVT). Residue A61 is a topological domain, extracellular. A helical membrane pass occupies residues 62–82 (FCFLVAAMVLQCMWSLSVATI). Topologically, residues 83–106 (EGYAMLVGRSLRDSPLLSLFAVGD) are cytoplasmic. Residues 107 to 127 (WVTAVITFAGACASAGIAVLV) form a helical membrane-spanning segment. At 128-148 (GRDIHRGCDVNFCGRYAAAAG) the chain is on the extracellular side. Residues 149–169 (MAFLSWLLISTSFLFTFWLLA) traverse the membrane as a helical segment. Topologically, residues 170–171 (TR) are cytoplasmic.

The protein belongs to the Casparian strip membrane proteins (CASP) family. Homodimer and heterodimers.

The protein resides in the cell membrane. This Pteridium aquilinum subsp. aquilinum (Bracken fern) protein is CASP-like protein 5A2.